We begin with the raw amino-acid sequence, 423 residues long: Protein CLP1 homolog (423 aa).

Residues glutamate 16, lysine 57, and 119 to 124 (DVGKST) each bind ATP.

This sequence belongs to the Clp1 family. Clp1 subfamily.

The protein resides in the nucleus. In terms of biological role, required for endonucleolytic cleavage during polyadenylation-dependent pre-mRNA 3'-end formation. The chain is Protein CLP1 homolog (cbc) from Drosophila yakuba (Fruit fly).